A 156-amino-acid polypeptide reads, in one-letter code: Small ribosomal subunit protein uS7 (156 aa).

It belongs to the universal ribosomal protein uS7 family. As to quaternary structure, part of the 30S ribosomal subunit. Contacts proteins S9 and S11.

One of the primary rRNA binding proteins, it binds directly to 16S rRNA where it nucleates assembly of the head domain of the 30S subunit. Is located at the subunit interface close to the decoding center, probably blocks exit of the E-site tRNA. The chain is Small ribosomal subunit protein uS7 from Dehalococcoides mccartyi (strain ATCC BAA-2266 / KCTC 15142 / 195) (Dehalococcoides ethenogenes (strain 195)).